Reading from the N-terminus, the 291-residue chain is Small ribosomal subunit biogenesis GTPase RsgA 2 (291 aa).

A CP-type G domain is found at 63-221 (ENALVRPPVA…VADTPGFSSI (159 aa)). GTP contacts are provided by residues 112–115 (SKMD) and 164–172 (GQSGVGKST). Cys-245, Cys-250, His-252, and Cys-258 together coordinate Zn(2+).

Belongs to the TRAFAC class YlqF/YawG GTPase family. RsgA subfamily. As to quaternary structure, monomer. Associates with 30S ribosomal subunit, binds 16S rRNA. It depends on Zn(2+) as a cofactor.

It localises to the cytoplasm. One of several proteins that assist in the late maturation steps of the functional core of the 30S ribosomal subunit. Helps release RbfA from mature subunits. May play a role in the assembly of ribosomal proteins into the subunit. Circularly permuted GTPase that catalyzes slow GTP hydrolysis, GTPase activity is stimulated by the 30S ribosomal subunit. The protein is Small ribosomal subunit biogenesis GTPase RsgA 2 of Listeria innocua serovar 6a (strain ATCC BAA-680 / CLIP 11262).